The sequence spans 321 residues: NADPH-dependent codeinone reductase 1-3 (321 aa).

Thr27 and Asp51 together coordinate NADPH. Catalysis depends on proton donor residues Tyr56 and His119. His119 contributes to the substrate binding site. Gln187, Ser214, Leu216, Ser264, and Arg269 together coordinate NADPH. The segment at 300–321 is disordered; it reads ADFLLSPTGPFKTEEEFWDEKD.

It belongs to the aldo/keto reductase family. Latex secreting cells (laticifer cells). Expressed constitutively in all organs with highest levels in capsules. Restricted to the parietal region of sieve elements adjacent or proximal to laticifers in roots, stems, leaves and carpels.

Its subcellular location is the cytoplasm. The protein localises to the cytosol. The enzyme catalyses codeine + NADP(+) = codeinone + NADPH + H(+). It carries out the reaction neopine + NADP(+) = neopinone + NADPH + H(+). The catalysed reaction is morphine + NADP(+) = morphinone + NADPH + H(+). It catalyses the reaction neomorphine + NADP(+) = neomorphinone + NADPH + H(+). The protein operates within alkaloid biosynthesis; morphine biosynthesis. Its function is as follows. NADPH-dependent codeinone reductase involved in biosynthesis of morphinan-type benzylisoquinoline and opiate alkaloids natural products. Reduces codeinone to codeine in the penultimate step in morphine biosynthesis. Can use morphinone, hydrocodone and hydromorphone as substrate during reductive reaction with NADPH as cofactor, and morphine and dihydrocodeine as substrate during oxidative reaction with NADP as cofactor. Converts morphinone to morphine, and neomorphinone to neomorphine. Reduces irreversibly neopinone, a spontaneous isomer of codeinone, to neopine; in planta, neopine levels are limited to low levels. This chain is NADPH-dependent codeinone reductase 1-3, found in Papaver somniferum (Opium poppy).